Consider the following 388-residue polypeptide: Na(+)/H(+) antiporter NhaA (388 aa).

The next 11 helical transmembrane spans lie at 14–34 (GGII…MGAT), 59–79 (MLLW…GLEV), 95–115 (AFPV…YLAF), 125–145 (GWAI…ALLG), 154–174 (IFLM…IALF), 179–199 (LSIV…LLNL), 219–239 (VLKS…FIPL), 254–274 (VLHP…NAGV), 292–312 (IIAG…WLAL), 328–348 (IMAV…IASL), and 360–380 (WAKL…YSWL).

The protein belongs to the NhaA Na(+)/H(+) (TC 2.A.33) antiporter family.

The protein localises to the cell inner membrane. The enzyme catalyses Na(+)(in) + 2 H(+)(out) = Na(+)(out) + 2 H(+)(in). Functionally, na(+)/H(+) antiporter that extrudes sodium in exchange for external protons. This chain is Na(+)/H(+) antiporter NhaA, found in Salmonella choleraesuis (strain SC-B67).